A 491-amino-acid chain; its full sequence is ATP synthase subunit beta, chloroplastic (491 aa).

163-170 serves as a coordination point for ATP; the sequence is GGAGVGKT.

It belongs to the ATPase alpha/beta chains family. F-type ATPases have 2 components, CF(1) - the catalytic core - and CF(0) - the membrane proton channel. CF(1) has five subunits: alpha(3), beta(3), gamma(1), delta(1), epsilon(1). CF(0) has four main subunits: a(1), b(1), b'(1) and c(9-12).

Its subcellular location is the plastid. The protein resides in the chloroplast thylakoid membrane. The enzyme catalyses ATP + H2O + 4 H(+)(in) = ADP + phosphate + 5 H(+)(out). Its function is as follows. Produces ATP from ADP in the presence of a proton gradient across the membrane. The catalytic sites are hosted primarily by the beta subunits. The chain is ATP synthase subunit beta, chloroplastic from Nephroselmis olivacea (Green alga).